The chain runs to 188 residues: CyanoP (188 aa).

A signal peptide spans 1–23; it reads MLKKSLSTAVVLVTLLLSFTLTA. Cysteine 24 carries the N-palmitoyl cysteine lipid modification. A lipid anchor (S-diacylglycerol cysteine) is attached at cysteine 24.

It belongs to the PsbP family. CyanoP subfamily. As to quaternary structure, monomer. Present in about 3% of photosystem II (PSII) preparations. Purifies with partially assembled PSII complexes, in addition to a small amount of monomeric and dimeric PSII, and trimeric PSI.

Its subcellular location is the cellular thylakoid membrane. Functionally, plays a role in the early stages of photosystem II (PSII) assembly; binds to D2 (psbD) and may facilitate its incorporation into PSII. Required for optimal photoautotrophic growth in the absence of Ca(2+) or Cl(-), functions in optimizing PSII water oxidation/O(2) evolving activity. Might be involved in assembly of the oxygen evolving complex. This Synechocystis sp. (strain ATCC 27184 / PCC 6803 / Kazusa) protein is CyanoP.